Consider the following 519-residue polypeptide: F-box-like/WD repeat-containing protein TBL1XR1-A (519 aa).

The region spanning 4-36 (SSDEVNFLVYRYLQESGFSHSAFTFGIESHISQ) is the LisH domain. The F-box-like domain maps to 41–86 (GALAPPAALISIIQKGLQYVEAEVSINEDGTLFDGRPIESLSLIDA). Residues 115-139 (AAAAAATPNNQQPPAKNGENTANGE) show a composition bias toward low complexity. The segment at 115-147 (AAAAAATPNNQQPPAKNGENTANGEENGGHALA) is disordered. 8 WD repeats span residues 172 to 211 (GHESEVFICAWNPVSDLLASGSGDSTARIWNLSENSTSGS), 228 to 267 (PSNKDVTSLDWNSEGTLLATGSYDGFARIWTKDGNLASTL), 269 to 308 (QHKGPIFALKWNKKGNFILSAGVDKTTIIWDAHTGEAKQQ), 311 to 349 (FHSAPALDVDWQSNNTFASCSTDMCIHVCKLGQDRPIKT), 352 to 391 (GHTNEVNAIKWDPTGNLLASCSDDMTLKIWSMKHDTCVHD), 394 to 442 (AHNK…CIHT), 445 to 484 (KHQEPVYSVAFSPDGRYLASGSFDKCVHIWNTQTGALVHS), and 486 to 519 (RGTGGIFEVCWNAAGDKVGASASDGSVCVLDLRK).

This sequence belongs to the WD repeat EBI family. In terms of assembly, interacts with heterodimers of rxra and thrb, and this interaction is abrogated by thyroid hormone binding to thrb. Interacts with ncor1.

The protein resides in the nucleus. Functionally, F-box-like protein which acts as an integral component of the N-CoR transcriptional corepressor complex. Probably regulates transcription activation mediated by nuclear receptors. May mediate the recruitment of the 19S proteasome complex, leading to the subsequent proteasomal degradation of the N-CoR complex, thereby allowing cofactor exchange and transcription activation. This chain is F-box-like/WD repeat-containing protein TBL1XR1-A (tbl1xr1-a), found in Xenopus laevis (African clawed frog).